Consider the following 445-residue polypeptide: Enolase 2 (445 aa).

Substrate is bound by residues histidine 164 and glutamate 173. Catalysis depends on glutamate 216, which acts as the Proton donor. Mg(2+) contacts are provided by aspartate 251, glutamate 301, and aspartate 328. Residues glutamate 301 and aspartate 328 each coordinate substrate. The active-site Proton acceptor is the lysine 353. Substrate is bound by residues 380 to 383 (SHRS) and lysine 404.

It belongs to the enolase family. As to quaternary structure, homodimer. Requires Mg(2+) as cofactor.

The protein resides in the cytoplasm. The catalysed reaction is (2R)-2-phosphoglycerate = phosphoenolpyruvate + H2O. It participates in carbohydrate degradation; glycolysis; pyruvate from D-glyceraldehyde 3-phosphate: step 4/5. In Hevea brasiliensis (Para rubber tree), this protein is Enolase 2 (ENO2).